Consider the following 454-residue polypeptide: Bifunctional protein GlmU (454 aa).

The tract at residues 1–232 (MTDRTCLSIV…VDNVIGINNR (232 aa)) is pyrophosphorylase. UDP-N-acetyl-alpha-D-glucosamine is bound by residues 11–14 (LAAG), lysine 25, glutamine 78, and 83–84 (GT). Aspartate 108 contributes to the Mg(2+) binding site. 4 residues coordinate UDP-N-acetyl-alpha-D-glucosamine: glycine 144, glutamate 158, asparagine 173, and asparagine 230. Asparagine 230 lines the Mg(2+) pocket. A linker region spans residues 233–253 (VELAEAEAIWQQRKRREMMLA). Residues 254–454 (GVTLIAPETV…AIKAAKTATK (201 aa)) form an N-acetyltransferase region. Residues arginine 319 and lysine 337 each coordinate UDP-N-acetyl-alpha-D-glucosamine. The active-site Proton acceptor is histidine 349. 2 residues coordinate UDP-N-acetyl-alpha-D-glucosamine: tyrosine 352 and asparagine 363. Residues alanine 366, 372-373 (NY), serine 391, serine 409, and arginine 426 contribute to the acetyl-CoA site.

The protein in the N-terminal section; belongs to the N-acetylglucosamine-1-phosphate uridyltransferase family. In the C-terminal section; belongs to the transferase hexapeptide repeat family. As to quaternary structure, homotrimer. Mg(2+) is required as a cofactor.

It localises to the cytoplasm. The enzyme catalyses alpha-D-glucosamine 1-phosphate + acetyl-CoA = N-acetyl-alpha-D-glucosamine 1-phosphate + CoA + H(+). It carries out the reaction N-acetyl-alpha-D-glucosamine 1-phosphate + UTP + H(+) = UDP-N-acetyl-alpha-D-glucosamine + diphosphate. It participates in nucleotide-sugar biosynthesis; UDP-N-acetyl-alpha-D-glucosamine biosynthesis; N-acetyl-alpha-D-glucosamine 1-phosphate from alpha-D-glucosamine 6-phosphate (route II): step 2/2. The protein operates within nucleotide-sugar biosynthesis; UDP-N-acetyl-alpha-D-glucosamine biosynthesis; UDP-N-acetyl-alpha-D-glucosamine from N-acetyl-alpha-D-glucosamine 1-phosphate: step 1/1. Its pathway is bacterial outer membrane biogenesis; LPS lipid A biosynthesis. Its function is as follows. Catalyzes the last two sequential reactions in the de novo biosynthetic pathway for UDP-N-acetylglucosamine (UDP-GlcNAc). The C-terminal domain catalyzes the transfer of acetyl group from acetyl coenzyme A to glucosamine-1-phosphate (GlcN-1-P) to produce N-acetylglucosamine-1-phosphate (GlcNAc-1-P), which is converted into UDP-GlcNAc by the transfer of uridine 5-monophosphate (from uridine 5-triphosphate), a reaction catalyzed by the N-terminal domain. The polypeptide is Bifunctional protein GlmU (Brucella anthropi (strain ATCC 49188 / DSM 6882 / CCUG 24695 / JCM 21032 / LMG 3331 / NBRC 15819 / NCTC 12168 / Alc 37) (Ochrobactrum anthropi)).